Here is a 202-residue protein sequence, read N- to C-terminus: Imidazoleglycerol-phosphate dehydratase (202 aa).

This sequence belongs to the imidazoleglycerol-phosphate dehydratase family.

It is found in the cytoplasm. The catalysed reaction is D-erythro-1-(imidazol-4-yl)glycerol 3-phosphate = 3-(imidazol-4-yl)-2-oxopropyl phosphate + H2O. Its pathway is amino-acid biosynthesis; L-histidine biosynthesis; L-histidine from 5-phospho-alpha-D-ribose 1-diphosphate: step 6/9. The chain is Imidazoleglycerol-phosphate dehydratase from Nocardioides sp. (strain ATCC BAA-499 / JS614).